The following is a 417-amino-acid chain: Serine hydroxymethyltransferase (417 aa).

Residues leucine 112 and 116-118 (GHL) contribute to the (6S)-5,6,7,8-tetrahydrofolate site. Position 221 is an N6-(pyridoxal phosphate)lysine (lysine 221). (6S)-5,6,7,8-tetrahydrofolate is bound at residue glutamate 247.

Belongs to the SHMT family. In terms of assembly, homodimer. Pyridoxal 5'-phosphate is required as a cofactor.

It localises to the cytoplasm. It carries out the reaction (6R)-5,10-methylene-5,6,7,8-tetrahydrofolate + glycine + H2O = (6S)-5,6,7,8-tetrahydrofolate + L-serine. The protein operates within one-carbon metabolism; tetrahydrofolate interconversion. It participates in amino-acid biosynthesis; glycine biosynthesis; glycine from L-serine: step 1/1. In terms of biological role, catalyzes the reversible interconversion of serine and glycine with tetrahydrofolate (THF) serving as the one-carbon carrier. This reaction serves as the major source of one-carbon groups required for the biosynthesis of purines, thymidylate, methionine, and other important biomolecules. Also exhibits THF-independent aldolase activity toward beta-hydroxyamino acids, producing glycine and aldehydes, via a retro-aldol mechanism. In Borrelia duttonii (strain Ly), this protein is Serine hydroxymethyltransferase.